Reading from the N-terminus, the 329-residue chain is MISIAIDAMGGDFGPEPIITGVLDALKHRSFNAVLVGDIQKIKPLIPEDYARFVTYIESSEVFSMGESATDALKRKESSIFKAIELVKNGECKAIVSAGHSGATMSLATLRIGRLKNVARPAIATLMPTSLNKKTLVLDVGANVDCKAEHLFQFAIMGESYAKQIMRVKNPKVGLLSNGEEDCKGNEVTKEAFEMMSKLDSFIGNVEGNQIFDGSVDVIICDGFVGNILLKTSEGVASAISKIIKESVKKSPFATVGALLMKRVFKALKIQIDYDEYGGAPLLGVKDCVIISHGKSSPKAVKNAIFQALKFAESDINRVIEDELSHFVR.

It belongs to the PlsX family. As to quaternary structure, homodimer. Probably interacts with PlsY.

It localises to the cytoplasm. It catalyses the reaction a fatty acyl-[ACP] + phosphate = an acyl phosphate + holo-[ACP]. Its pathway is lipid metabolism; phospholipid metabolism. Its function is as follows. Catalyzes the reversible formation of acyl-phosphate (acyl-PO(4)) from acyl-[acyl-carrier-protein] (acyl-ACP). This enzyme utilizes acyl-ACP as fatty acyl donor, but not acyl-CoA. The polypeptide is Phosphate acyltransferase (Campylobacter fetus subsp. fetus (strain 82-40)).